A 580-amino-acid chain; its full sequence is Putative Xaa-Pro dipeptidyl-peptidase (580 aa).

Active-site charge relay system residues include Ser207, Asp319, and His350.

This sequence belongs to the peptidase S15 family.

The enzyme catalyses Hydrolyzes Xaa-Pro-|- bonds to release unblocked, N-terminal dipeptides from substrates including Ala-Pro-|-p-nitroanilide and (sequentially) Tyr-Pro-|-Phe-Pro-|-Gly-Pro-|-Ile.. This Bacillus cereus (strain ATCC 14579 / DSM 31 / CCUG 7414 / JCM 2152 / NBRC 15305 / NCIMB 9373 / NCTC 2599 / NRRL B-3711) protein is Putative Xaa-Pro dipeptidyl-peptidase.